Here is a 148-residue protein sequence, read N- to C-terminus: Small ribosomal subunit protein uS15 (148 aa).

Positions Met1 to Ser14 are enriched in basic residues. Residues Met1–Gln27 form a disordered region.

It belongs to the universal ribosomal protein uS15 family. Part of the 30S ribosomal subunit.

In Cenarchaeum symbiosum (strain A), this protein is Small ribosomal subunit protein uS15.